The sequence spans 266 residues: Luciferase (266 aa).

A helical membrane pass occupies residues 22-41 (GLAVTCCAVAVASIIAFPYI).

It belongs to the fungal luciferase family.

The protein resides in the membrane. It carries out the reaction 3-hydroxyhispidin + O2 = (E)-caffeoylpyruvate + hnu + CO2. It catalyses the reaction 3-hydroxyhispidin + O2 = 4-[(E)-2-(3,4-dihydroxyphenyl)ethenyl]-1,7-dihydroxy-2,3,5-trioxabicyclo[2.2.2]oct-7-en-6-one. In terms of biological role, luciferase; part of the gene cluster that mediates the fungal bioluminescence cycle. Uses the fungal luciferin 3-hydroxyhispidin as a substrate to produce an endoperoxide as a high-energy intermediate with decomposition that yields oxyluciferin (also known as caffeoylpyruvate) and light emission. The fungal bioluminescence cycle begins with the hispidin synthetase that catalyzes the formation of hispidin which is further hydroxylated by the hispidin-3-hydroxylase, yielding the fungal luciferin 3-hydroxyhispidin. The luciferase then produces an endoperoxide as a high-energy intermediate with decomposition that yields oxyluciferin and light emission. Oxyluciferin can be recycled to caffeic acid by caffeoylpyruvate hydrolase. In Armillaria mellea (Honey mushroom), this protein is Luciferase.